A 46-amino-acid chain; its full sequence is uncharacterized protein (46 aa).

The disordered stretch occupies residues 1–46 (MNFGIKPDVSSGPRKGGPFKELSDFSKTSPTPQQPRSLSGKSVMLP). A compositionally biased stretch (polar residues) spans 25–40 (FSKTSPTPQQPRSLSG).

This is an uncharacterized protein from Dictyostelium discoideum (Social amoeba).